Here is a 168-residue protein sequence, read N- to C-terminus: Large ribosomal subunit protein uL10 (168 aa).

The protein belongs to the universal ribosomal protein uL10 family. As to quaternary structure, part of the ribosomal stalk of the 50S ribosomal subunit. The N-terminus interacts with L11 and the large rRNA to form the base of the stalk. The C-terminus forms an elongated spine to which L12 dimers bind in a sequential fashion forming a multimeric L10(L12)X complex.

In terms of biological role, forms part of the ribosomal stalk, playing a central role in the interaction of the ribosome with GTP-bound translation factors. This Mycoplasmopsis pulmonis (strain UAB CTIP) (Mycoplasma pulmonis) protein is Large ribosomal subunit protein uL10 (rplJ).